Here is a 375-residue protein sequence, read N- to C-terminus: uncharacterized protein (375 aa).

7 consecutive transmembrane segments (helical) span residues 21–41 (LLLLIPLLVGLTLIIYGIVLF), 66–86 (IIVFVVGSIILFFTLASFCVS), 160–180 (LVGVLIALNLALSLIEIPGIV), 203–223 (LVGLLSTSLVALITPWLHLLI), 234–254 (FYMVNDFLVLWIFYFFFFHLF), 289–309 (VISFLCGFIEGLGFYFGYFLI), and 338–358 (FFLMTTTAIFSIKYIFEMLFF).

The protein localises to the cell membrane. This is an uncharacterized protein from Mycoplasma genitalium (strain ATCC 33530 / DSM 19775 / NCTC 10195 / G37) (Mycoplasmoides genitalium).